The primary structure comprises 172 residues: Small t antigen (172 aa).

At Met-1 the chain carries N-acetylmethionine; by host. Residues 12-75 (ELMDLLGLER…VKVAHQPDFG (64 aa)) enclose the J domain. The C4-type; atypical zinc-finger motif lies at 101–114 (CSKKPSVHCPCMLC). An H1C3-type; atypical zinc finger spans residues 120-141 (HLNRKFLRKEPLVWIDCYCIDC).

In terms of assembly, interacts with host PPP2R1A; the interaction inhibits PP2A activity.

Its subcellular location is the host cytoplasm. It is found in the host nucleus. Promotes efficient viral genome replication by accelerating both G1 and S phase progression of the cell cycle. Inhibits host PP2A by binding to the A subunit, thereby displacing lower affinity regulatory B subunit. Inactivation of PP2A in turn results in the transactivation of cyclin A and cyclin D1 promoters. Late during the infection cycle, ST may induce dephosphorylation of host MTOR, leading to the inhibition of cap-dependent translation. May establish and maintain high levels of viral genomes during persistent infection in cell culture. This chain is Small t antigen, found in Homo sapiens (Human).